Consider the following 434-residue polypeptide: Putative ankyrin repeat protein FPV219 (434 aa).

ANK repeat units follow at residues D33–L62, E66–C95, H101–Y131, T132–T161, L165–S195, L196–A225, and E229–I258.

The sequence is that of Putative ankyrin repeat protein FPV219 from Fowlpox virus (strain NVSL) (FPV).